Reading from the N-terminus, the 183-residue chain is Ras-related protein Rap-2a (183 aa).

Residue 10-17 (GSGGVGKS) participates in GTP binding. An Effector region motif is present at residues 32–40 (YDPTIEDFY). GTP-binding positions include 57–61 (DTAGT) and 116–119 (NKVD). Residues cysteine 176 and cysteine 177 are each lipidated (S-palmitoyl cysteine). A Cysteine methyl ester modification is found at cysteine 180. Residue cysteine 180 is the site of S-farnesyl cysteine attachment. Positions 181-183 (NIQ) are cleaved as a propeptide — removed in mature form.

It belongs to the small GTPase superfamily. Ras family. Interacts with PLCE1. Interacts with ARHGAP29, SGSM1, SGSM2 and SGSM3. Interacts (GTP-bound form preferentially) with MAP4K4. Interacts with MINK1. Interacts with cytoskeletal actin. Interacts (GTP-bound form) with RUNDC3A. Interacts (GTP-bound form preferentially) with TNIK (via the CNH domain); the interaction is direct and recruits RAP2A to the E3 ubiquitin ligase NEDD4. Interacts with RGS14; the interaction is GTP-dependent. Post-translationally, ubiquitinated; undergoes 'Lys-63' monoubiquitination and diubiquitination by NEDD4. Multiple lysine residues are probably modified. Ubiquitination requires TNIK, prevents interaction with effectors and inactivates RAP2A. Ubiquitination by the ECS(RAB40B) complex leads to RAP2A localization to lamellipodia plasma membrane, activation, and regulation of sorting at early endosomes for recycling to the lamellipodia plasma membrane. Palmitoylated. Palmitoylation is required for association with recycling endosome membranes and activation of TNIK. As to expression, expressed in granular layer of the cerebellum, forebrain, striatum, layer V of the cortex, olfactory cortex, tubercules, subthalamic and hippocampus, particularly in the CA2 region, to a lesser extent in the CA1 region and the external layer of the dentate gyrus. Expressed in neurons.

The protein resides in the midbody. Its subcellular location is the cell projection. The protein localises to the lamellipodium membrane. It localises to the golgi apparatus. It is found in the recycling endosome membrane. The protein resides in the lysosome. The catalysed reaction is GTP + H2O = GDP + phosphate + H(+). With respect to regulation, activated by the guanine nucleotide-exchange factors RAPGEF3 and RAPGEF4 in a cAMP-dependent manner. Nucleotide exchange is also specifically stimulated by RAPGEF5, RASGEF1A and RASGEF1B. Its function is as follows. Small GTP-binding protein which cycles between a GDP-bound inactive and a GTP-bound active form. In its active form interacts with and regulates several effectors including MAP4K4, MINK1 and TNIK. Part of a signaling complex composed of NEDD4, RAP2A and TNIK which regulates neuronal dendrite extension and arborization during development. More generally, it is part of several signaling cascades and may regulate cytoskeletal rearrangements, cell migration, cell adhesion and cell spreading. In Mus musculus (Mouse), this protein is Ras-related protein Rap-2a.